A 103-amino-acid chain; its full sequence is Small ribosomal subunit protein bS6c (103 aa).

Belongs to the bacterial ribosomal protein bS6 family.

The protein localises to the plastid. It is found in the chloroplast. In terms of biological role, binds together with bS18 to 16S ribosomal RNA. The sequence is that of Small ribosomal subunit protein bS6c from Thalassiosira pseudonana (Marine diatom).